The sequence spans 268 residues: Probable histidine-binding protein (268 aa).

A signal peptide spans 1–20 (MNMKKWIAAALACSALALSA). A lipid anchor (N-palmitoyl cysteine) is attached at C21. C21 carries the S-diacylglycerol cysteine lipid modification.

The protein belongs to the bacterial solute-binding protein 3 family.

The protein resides in the cell membrane. Involved in histidine transport. The polypeptide is Probable histidine-binding protein (hisJ) (Neisseria gonorrhoeae).